Here is an 898-residue protein sequence, read N- to C-terminus: Cip1-interacting zinc finger protein (898 aa).

Disordered stretches follow at residues 48 to 69, 157 to 305, and 318 to 471; these read QAPLPMAVSRGLPPQQPQQPLL, QSLL…ALEA, and VQAQ…QPQV. Residues 170–203 are compositionally biased toward polar residues; the sequence is NPSQFNLSGRNPQKQARTSSSTTPNRKDSSSQTM. A Phosphoserine modification is found at serine 209. Phosphothreonine is present on threonine 244. Residues 263–273 are compositionally biased toward basic and acidic residues; it reads RSSEEPTEKEP. Lysine 280 participates in a covalent cross-link: Glycyl lysine isopeptide (Lys-Gly) (interchain with G-Cter in SUMO2). Residues 318–327 are compositionally biased toward low complexity; it reads VQAQVQSQTQ. Positions 328–351 are enriched in polar residues; it reads PRIPSTDTQVQPKLQKQAQTQTSP. Residue lysine 340 forms a Glycyl lysine isopeptide (Lys-Gly) (interchain with G-Cter in SUMO2) linkage. Serine 350 bears the Phosphoserine mark. Low complexity predominate over residues 355–383; the sequence is VLQQKQVQPQLQQEAEPQKQVQPQVQPQA. A compositionally biased stretch (polar residues) spans 384-395; that stretch reads HSQGPRQVQLQQ. Lysine 401 is covalently cross-linked (Glycyl lysine isopeptide (Lys-Gly) (interchain with G-Cter in SUMO2)). Over residues 402–435 the composition is skewed to low complexity; sequence QVQPQVQPQAHSQPPRQVQLQLQKQVQTQTYPQV. Residues 436-445 are compositionally biased toward polar residues; it reads HTQAQPSVQP. At serine 547 the chain carries Phosphoserine. Lysine 549 is covalently cross-linked (Glycyl lysine isopeptide (Lys-Gly) (interchain with G-Cter in SUMO2)). Positions 562–584 are disordered; sequence STVPLTPVPRPSDSVSSTPAATS. A Phosphothreonine modification is found at threonine 567. Residues 572–584 show a composition bias toward low complexity; that stretch reads PSDSVSSTPAATS. Glycyl lysine isopeptide (Lys-Gly) (interchain with G-Cter in SUMO2) cross-links involve residues lysine 588, lysine 680, and lysine 705. The Matrin-type zinc-finger motif lies at 799-830; it reads YICRICHKFYHSNSGAQLSHCKSLGHFENLQK. Serine 821 is modified (phosphoserine). Lysine 830 participates in a covalent cross-link: Glycyl lysine isopeptide (Lys-Gly) (interchain with G-Cter in SUMO2). A Phosphoserine modification is found at serine 838. Polar residues predominate over residues 859 to 879; that stretch reads LFTSSGRPPSQPNTQDKTPSK. The disordered stretch occupies residues 859–898; that stretch reads LFTSSGRPPSQPNTQDKTPSKVTARPSQPPLPRRSTRLKT. A Glycyl lysine isopeptide (Lys-Gly) (interchain with G-Cter in SUMO2) cross-link involves residue lysine 879.

In terms of assembly, interacts with CIP/WAF1.

It localises to the nucleus. May regulate the subcellular localization of CIP/WAF1. This chain is Cip1-interacting zinc finger protein (CIZ1), found in Homo sapiens (Human).